A 342-amino-acid chain; its full sequence is Heat-inducible transcription repressor HrcA (342 aa).

The protein belongs to the HrcA family.

In terms of biological role, negative regulator of class I heat shock genes (grpE-dnaK-dnaJ and groELS operons). Prevents heat-shock induction of these operons. This Mesoplasma florum (strain ATCC 33453 / NBRC 100688 / NCTC 11704 / L1) (Acholeplasma florum) protein is Heat-inducible transcription repressor HrcA.